The chain runs to 590 residues: Muscarinic acetylcholine receptor M3 (590 aa).

At 1-67 the chain is on the extracellular side; it reads MTLHNNSTTS…DPLGGHTVWQ (67 aa). 5 N-linked (GlcNAc...) asparagine glycosylation sites follow: N5, N6, N15, N41, and N48. A helical membrane pass occupies residues 68–91; the sequence is VVFIAFLTGILALVTIIGNILVIV. Over 92–104 the chain is Cytoplasmic; that stretch reads SFKVNKQLKTVNN. Residues 105 to 130 traverse the membrane as a helical segment; that stretch reads YFLLSLACADLIIGVISMNLFTTYII. The Extracellular portion of the chain corresponds to 131–142; that stretch reads MNRWALGNLACD. The cysteines at positions 141 and 221 are disulfide-linked. The chain crosses the membrane as a helical span at residues 143–164; that stretch reads LWLAIDYVASNASVMNLLVISF. Residues 165 to 184 are Cytoplasmic-facing; that stretch reads DRYFSITRPLTYRAKRTTKR. The helical transmembrane segment at 185-206 threads the bilayer; it reads AGVMIGLAWVISFVLWAPAILF. The Extracellular segment spans residues 207 to 229; sequence WQYFVGKRTVPPGECFIQFLSEP. A helical transmembrane segment spans residues 230 to 252; that stretch reads TITFGTAIAAFYMPVTIMTILYW. The Cytoplasmic portion of the chain corresponds to 253 to 491; the sequence is RIYKETEKRT…SLVKEKKAAQ (239 aa). Residues 275–281 carry the Basolateral sorting signal motif; it reads AETENFV. A disordered region spans residues 323–357; it reads SSEQMDQDHSSSDSWNNNDAAASLENSASSDEEDI. Low complexity predominate over residues 334–345; it reads SDSWNNNDAAAS. Residue S385 is modified to Phosphoserine. A helical transmembrane segment spans residues 492–514; it reads TLSAILLAFIITWTPYNIMVLVN. The Extracellular segment spans residues 515–526; it reads TFCDSCIPKTFW. C517 and C520 are oxidised to a cystine. The chain crosses the membrane as a helical span at residues 527 to 546; that stretch reads NLGYWLCYINSTVNPVCYAL. The Cytoplasmic portion of the chain corresponds to 547–590; that stretch reads CNKTFRTTFKMLLLCQCGKKKRRKQQYQQRQSVIFHKRAPEQAL.

Belongs to the G-protein coupled receptor 1 family. Muscarinic acetylcholine receptor subfamily. CHRM3 sub-subfamily. As to quaternary structure, homodimer; the dimers can form tetramers. Interacts with NALCN. Interacts with TMEM147.

It localises to the cell membrane. The protein localises to the postsynaptic cell membrane. The protein resides in the basolateral cell membrane. It is found in the endoplasmic reticulum membrane. The muscarinic acetylcholine receptor mediates various cellular responses, including inhibition of adenylate cyclase, breakdown of phosphoinositides and modulation of potassium channels through the action of G proteins. Primary transducing effect is Pi turnover. This chain is Muscarinic acetylcholine receptor M3 (CHRM3), found in Gorilla gorilla gorilla (Western lowland gorilla).